The primary structure comprises 304 residues: tRNA dimethylallyltransferase (304 aa).

2-9 (GPTASGKT) is a binding site for ATP. Substrate is bound at residue 4–9 (TASGKT). Positions 28-31 (DSAL) are interaction with substrate tRNA.

The protein belongs to the IPP transferase family. Monomer. Mg(2+) is required as a cofactor.

It catalyses the reaction adenosine(37) in tRNA + dimethylallyl diphosphate = N(6)-dimethylallyladenosine(37) in tRNA + diphosphate. Catalyzes the transfer of a dimethylallyl group onto the adenine at position 37 in tRNAs that read codons beginning with uridine, leading to the formation of N6-(dimethylallyl)adenosine (i(6)A). The protein is tRNA dimethylallyltransferase of Blochmanniella pennsylvanica (strain BPEN).